The following is a 436-amino-acid chain: GTPase Der (436 aa).

EngA-type G domains follow at residues 4 to 167 (PTVA…PVEE) and 175 to 351 (IRFS…ESQN). Residues 10–17 (GRPNVGKS), 57–61 (DTGGI), 119–122 (NKVD), 181–188 (GRPNVGKS), 229–233 (DTAGM), and 294–297 (NKWD) contribute to the GTP site. The region spanning 352–436 (KRIPSAVLND…PIHLIARKRK (85 aa)) is the KH-like domain.

This sequence belongs to the TRAFAC class TrmE-Era-EngA-EngB-Septin-like GTPase superfamily. EngA (Der) GTPase family. In terms of assembly, associates with the 50S ribosomal subunit.

Its function is as follows. GTPase that plays an essential role in the late steps of ribosome biogenesis. The polypeptide is GTPase Der (Streptococcus uberis (strain ATCC BAA-854 / 0140J)).